The chain runs to 134 residues: Small ribosomal subunit protein uS8 (134 aa).

The protein belongs to the universal ribosomal protein uS8 family. In terms of assembly, part of the 30S ribosomal subunit. Contacts proteins S5 and S12.

Its function is as follows. One of the primary rRNA binding proteins, it binds directly to 16S rRNA central domain where it helps coordinate assembly of the platform of the 30S subunit. The polypeptide is Small ribosomal subunit protein uS8 (Thermotoga sp. (strain RQ2)).